The sequence spans 468 residues: UDP-N-acetylmuramate--L-alanine ligase (468 aa).

112 to 118 (GTHGKTT) is a binding site for ATP.

Belongs to the MurCDEF family.

It is found in the cytoplasm. The enzyme catalyses UDP-N-acetyl-alpha-D-muramate + L-alanine + ATP = UDP-N-acetyl-alpha-D-muramoyl-L-alanine + ADP + phosphate + H(+). It functions in the pathway cell wall biogenesis; peptidoglycan biosynthesis. Functionally, cell wall formation. The protein is UDP-N-acetylmuramate--L-alanine ligase of Bordetella avium (strain 197N).